Here is a 204-residue protein sequence, read N- to C-terminus: Probable 5-formyltetrahydrofolate cyclo-ligase (204 aa).

5–9 provides a ligand contact to ATP; the sequence is KNQLR. Substrate is bound by residues Glu-57, Trp-102, and 140–144; that span reads HGKGY. ATP-binding positions include 139–146 and Asp-188; that span reads GHGKGYYD.

It belongs to the 5-formyltetrahydrofolate cyclo-ligase family.

The catalysed reaction is (6S)-5-formyl-5,6,7,8-tetrahydrofolate + ATP = (6R)-5,10-methenyltetrahydrofolate + ADP + phosphate. The protein is Probable 5-formyltetrahydrofolate cyclo-ligase of Schizosaccharomyces pombe (strain 972 / ATCC 24843) (Fission yeast).